The sequence spans 103 residues: Pyrimidine/purine nucleoside phosphorylase (103 aa).

Belongs to the nucleoside phosphorylase PpnP family.

The catalysed reaction is a purine D-ribonucleoside + phosphate = a purine nucleobase + alpha-D-ribose 1-phosphate. The enzyme catalyses adenosine + phosphate = alpha-D-ribose 1-phosphate + adenine. It carries out the reaction cytidine + phosphate = cytosine + alpha-D-ribose 1-phosphate. It catalyses the reaction guanosine + phosphate = alpha-D-ribose 1-phosphate + guanine. The catalysed reaction is inosine + phosphate = alpha-D-ribose 1-phosphate + hypoxanthine. The enzyme catalyses thymidine + phosphate = 2-deoxy-alpha-D-ribose 1-phosphate + thymine. It carries out the reaction uridine + phosphate = alpha-D-ribose 1-phosphate + uracil. It catalyses the reaction xanthosine + phosphate = alpha-D-ribose 1-phosphate + xanthine. Its function is as follows. Catalyzes the phosphorolysis of diverse nucleosides, yielding D-ribose 1-phosphate and the respective free bases. Can use uridine, adenosine, guanosine, cytidine, thymidine, inosine and xanthosine as substrates. Also catalyzes the reverse reactions. The chain is Pyrimidine/purine nucleoside phosphorylase from Geobacter sp. (strain M21).